A 113-amino-acid polypeptide reads, in one-letter code: Hydrogenase maturation factor HypA (113 aa).

Ni(2+) is bound at residue His2. 4 residues coordinate Zn(2+): Cys73, Cys76, Cys89, and Cys92.

The protein belongs to the HypA/HybF family.

Its function is as follows. Involved in the maturation of [NiFe] hydrogenases. Required for nickel insertion into the metal center of the hydrogenase. This Dechloromonas aromatica (strain RCB) protein is Hydrogenase maturation factor HypA.